Here is a 2148-residue protein sequence, read N- to C-terminus: General transcription factor 3C polypeptide 1 (2148 aa).

Residues 473 to 487 (GEEAFLSDSESEEES) are compositionally biased toward acidic residues. 2 disordered regions span residues 473-568 (GEEA…FDPH) and 587-609 (NPKE…KPHK). The segment covering 491 to 502 (GKRRGRGSRGHS) has biased composition (basic residues). K533 is covalently cross-linked (Glycyl lysine isopeptide (Lys-Gly) (interchain with G-Cter in SUMO2)). S666 is subject to Phosphoserine. Disordered stretches follow at residues 717-771 (STAN…EKMG) and 818-863 (TGEQ…SSWE). Composition is skewed to basic and acidic residues over residues 759–770 (ESTRVKKTDEKM) and 825–835 (HSERKTGKQEP). Glycyl lysine isopeptide (Lys-Gly) (interchain with G-Cter in SUMO2) cross-links involve residues K769 and K832. Phosphoserine is present on S1062. The span at 1186–1195 (EHFELDREPT) shows a compositional bias: basic and acidic residues. 5 disordered regions span residues 1186 to 1238 (EHFE…KKLR), 1597 to 1627 (KSLG…SVEV), 1823 to 1881 (KASG…LPAK), 1893 to 1928 (SPRP…ESVG), and 2127 to 2148 (PRPS…ATSR). Phosphothreonine is present on T1195. The span at 1198-1214 (RNRKVRGGKSQKRKRLK) shows a compositional bias: basic residues. Basic and acidic residues predominate over residues 1228-1238 (EHPEAKSKKLR). The span at 1605-1616 (LDDDDEEEDLDE) shows a compositional bias: acidic residues. S1624, S1853, and S1893 each carry phosphoserine. The span at 1903–1912 (EAQAQFAAPE) shows a compositional bias: low complexity. The segment covering 2132–2148 (SCYQSSAQPSTGVATSR) has biased composition (polar residues).

Belongs to the TFIIIC subunit 1 family. In terms of assembly, part of the TFIIIC subcomplex TFIIIC2, consisting of six subunits, GTF3C1, GTF3C2, GTF3C3, GTF3C4, GTF3C5 and GTF3C6. Interacts with IGHMBP2. Interacts with MAF1.

The protein resides in the nucleus. In terms of biological role, required for RNA polymerase III-mediated transcription. Component of TFIIIC that initiates transcription complex assembly on tRNA and is required for transcription of 5S rRNA and other stable nuclear and cytoplasmic RNAs. Binds to the box B promoter element. In Rattus norvegicus (Rat), this protein is General transcription factor 3C polypeptide 1 (Gtf3c1).